The primary structure comprises 165 residues: MVVYVTLIVMLFGSTLVFYSLSPYYSALGLVVFSVPGSFVLSFLGSSFVPIVLFLVYIGGMLVVFPYSSAISPERFPSVNNLGEVVGLVFLFSSWVFMSFDNFQDLKNIFHCFVSGESLVGSNTFYNSGGVLVILGVFVLLVALVGALIISRGIESTIIRAIWLW.

The next 4 membrane-spanning stretches (helical) occupy residues 1–21 (MVVY…FYSL), 47–67 (SFVP…VFPY), 83–103 (GEVV…FDNF), and 130–150 (GVLV…ALII).

Belongs to the complex I subunit 6 family.

The protein resides in the mitochondrion membrane. It catalyses the reaction a ubiquinone + NADH + 5 H(+)(in) = a ubiquinol + NAD(+) + 4 H(+)(out). Its function is as follows. Core subunit of the mitochondrial membrane respiratory chain NADH dehydrogenase (Complex I) that is believed to belong to the minimal assembly required for catalysis. Complex I functions in the transfer of electrons from NADH to the respiratory chain. The immediate electron acceptor for the enzyme is believed to be ubiquinone. The polypeptide is NADH-ubiquinone oxidoreductase chain 6 (ND6) (Strongylocentrotus purpuratus (Purple sea urchin)).